We begin with the raw amino-acid sequence, 606 residues long: Glucose methanol choline oxidoreductase atC (606 aa).

Positions 1 to 19 are cleaved as a signal peptide; the sequence is MRVFPTYIAVSGLFGGAFA. N-linked (GlcNAc...) asparagine glycans are attached at residues asparagine 43, asparagine 69, asparagine 87, asparagine 290, asparagine 368, asparagine 418, asparagine 421, and asparagine 552.

This sequence belongs to the GMC oxidoreductase family.

The catalysed reaction is terremutin + A = terreate + AH2. It participates in secondary metabolite biosynthesis. Functionally, glucose methanol choline oxidoreductase; part of the gene cluster that mediates the biosynthesis of terreic acid, a quinone epoxide inhibitor of Bruton's tyrosine kinase. The first step of the pathway is the synthesis of 6-methylsalicylic acid (6-MSA) by the 6-methylsalicylic acid synthase atX. In the biosynthesis of 6-MSA, atX utilizes one acetyl-CoA and three malonyl-CoAs as its substrates and catalyzes a series of programmed reactions including Claisen condensation, reduction, aldol cyclization, and the hydrolytic cleavage that yields 6-MSA. The 6-methylsalicylate 1-monooxygenase atA then catalyzes the decarboxylative hydroxylation of 6-MSA to 3-methylcatechol. The next step is the conversion of 3-methylcatechol to 3-methyl-1,2,4-benzenetriol by cytochrome P450 monooxygenase atE, which is enhanced by cytochrome P450 monooxygenase atG. Then, the epoxidase atD catalyzes the epoxidation and hydroxyl oxidation of 3-methyl-1,2,4-benzenetriol to terremutin. Lastly, GMC oxidoreductase atC oxidizes terremutin to terreic acid. This is Glucose methanol choline oxidoreductase atC from Aspergillus terreus (strain NIH 2624 / FGSC A1156).